The chain runs to 154 residues: Fimbrial protein (154 aa).

The propeptide at 1-6 is leader sequence; the sequence is MNAQKG. At Phe7 the chain carries N-methylphenylalanine. Residues 7–29 form a helical membrane-spanning segment; the sequence is FTLIELMIVIAIIGILAAIALPA.

The protein belongs to the N-Me-Phe pilin family. The pili are polar flexible filaments of about 5.4 nanometers diameter and 2.5 micrometers average length; they consist of only a single polypeptide chain arranged in a helical configuration of five subunits per turn in the assembled pilus.

Its subcellular location is the fimbrium. The protein localises to the membrane. The sequence is that of Fimbrial protein (tfpA) from Moraxella nonliquefaciens.